Here is a 467-residue protein sequence, read N- to C-terminus: uncharacterized protein (467 aa).

Lys-290 carries the post-translational modification N6-(pyridoxal phosphate)lysine.

The protein belongs to the class-III pyridoxal-phosphate-dependent aminotransferase family. The cofactor is pyridoxal 5'-phosphate.

This is an uncharacterized protein from Sinorhizobium fredii (strain NBRC 101917 / NGR234).